The primary structure comprises 274 residues: Large ribosomal subunit protein uL2 (274 aa).

The segment at 224–274 (VAMNPVDHPHGGGEGRTSGGRHPVTPWGIPTKGYKTRRNKRSNKLIVQKRK) is disordered. The span at 257–274 (YKTRRNKRSNKLIVQKRK) shows a compositional bias: basic residues.

Belongs to the universal ribosomal protein uL2 family. As to quaternary structure, part of the 50S ribosomal subunit. Forms a bridge to the 30S subunit in the 70S ribosome.

In terms of biological role, one of the primary rRNA binding proteins. Required for association of the 30S and 50S subunits to form the 70S ribosome, for tRNA binding and peptide bond formation. It has been suggested to have peptidyltransferase activity; this is somewhat controversial. Makes several contacts with the 16S rRNA in the 70S ribosome. The polypeptide is Large ribosomal subunit protein uL2 (Francisella tularensis subsp. holarctica (strain FTNF002-00 / FTA)).